The sequence spans 311 residues: Meiotically up-regulated gene 146 protein (311 aa).

It localises to the cytoplasm. The protein localises to the nucleus. Functionally, has a role in sporulation. This Schizosaccharomyces pombe (strain 972 / ATCC 24843) (Fission yeast) protein is Meiotically up-regulated gene 146 protein (mug146).